We begin with the raw amino-acid sequence, 220 residues long: Probable septum site-determining protein MinC (220 aa).

The protein belongs to the MinC family. As to quaternary structure, interacts with MinD and FtsZ.

Functionally, cell division inhibitor that blocks the formation of polar Z ring septums. Rapidly oscillates between the poles of the cell to destabilize FtsZ filaments that have formed before they mature into polar Z rings. Prevents FtsZ polymerization. In Photobacterium profundum (strain SS9), this protein is Probable septum site-determining protein MinC.